Reading from the N-terminus, the 288-residue chain is Ribosomal RNA small subunit methyltransferase A (288 aa).

S-adenosyl-L-methionine contacts are provided by N37, L39, G64, E86, D112, and N131.

Belongs to the class I-like SAM-binding methyltransferase superfamily. rRNA adenine N(6)-methyltransferase family. RsmA subfamily.

It is found in the cytoplasm. It carries out the reaction adenosine(1518)/adenosine(1519) in 16S rRNA + 4 S-adenosyl-L-methionine = N(6)-dimethyladenosine(1518)/N(6)-dimethyladenosine(1519) in 16S rRNA + 4 S-adenosyl-L-homocysteine + 4 H(+). Specifically dimethylates two adjacent adenosines (A1518 and A1519) in the loop of a conserved hairpin near the 3'-end of 16S rRNA in the 30S particle. May play a critical role in biogenesis of 30S subunits. The protein is Ribosomal RNA small subunit methyltransferase A of Rhodospirillum rubrum (strain ATCC 11170 / ATH 1.1.1 / DSM 467 / LMG 4362 / NCIMB 8255 / S1).